The primary structure comprises 266 residues: Hydroxyethylthiazole kinase (266 aa).

Residue methionine 43 coordinates substrate. Residues arginine 119 and threonine 166 each contribute to the ATP site. Position 193 (glycine 193) interacts with substrate.

This sequence belongs to the Thz kinase family. Requires Mg(2+) as cofactor.

It carries out the reaction 5-(2-hydroxyethyl)-4-methylthiazole + ATP = 4-methyl-5-(2-phosphooxyethyl)-thiazole + ADP + H(+). Its pathway is cofactor biosynthesis; thiamine diphosphate biosynthesis; 4-methyl-5-(2-phosphoethyl)-thiazole from 5-(2-hydroxyethyl)-4-methylthiazole: step 1/1. Catalyzes the phosphorylation of the hydroxyl group of 4-methyl-5-beta-hydroxyethylthiazole (THZ). In Methanococcus vannielii (strain ATCC 35089 / DSM 1224 / JCM 13029 / OCM 148 / SB), this protein is Hydroxyethylthiazole kinase.